A 264-amino-acid chain; its full sequence is 3-methyl-2-oxobutanoate hydroxymethyltransferase (264 aa).

Mg(2+) is bound by residues Asp45 and Asp84. 3-methyl-2-oxobutanoate is bound by residues 45-46 (DS), Asp84, and Lys112. Glu114 contributes to the Mg(2+) binding site. The Proton acceptor role is filled by Glu181.

It belongs to the PanB family. As to quaternary structure, homodecamer; pentamer of dimers. Mg(2+) is required as a cofactor.

It localises to the cytoplasm. It catalyses the reaction 3-methyl-2-oxobutanoate + (6R)-5,10-methylene-5,6,7,8-tetrahydrofolate + H2O = 2-dehydropantoate + (6S)-5,6,7,8-tetrahydrofolate. Its pathway is cofactor biosynthesis; (R)-pantothenate biosynthesis; (R)-pantoate from 3-methyl-2-oxobutanoate: step 1/2. In terms of biological role, catalyzes the reversible reaction in which hydroxymethyl group from 5,10-methylenetetrahydrofolate is transferred onto alpha-ketoisovalerate to form ketopantoate. This is 3-methyl-2-oxobutanoate hydroxymethyltransferase from Pseudoalteromonas translucida (strain TAC 125).